Consider the following 49-residue polypeptide: Large ribosomal subunit protein bL33B (49 aa).

Belongs to the bacterial ribosomal protein bL33 family.

This Listeria welshimeri serovar 6b (strain ATCC 35897 / DSM 20650 / CCUG 15529 / CIP 8149 / NCTC 11857 / SLCC 5334 / V8) protein is Large ribosomal subunit protein bL33B.